The chain runs to 313 residues: Porphobilinogen deaminase (313 aa).

Cys-242 is subject to S-(dipyrrolylmethanemethyl)cysteine.

Belongs to the HMBS family. Monomer. Requires dipyrromethane as cofactor.

The enzyme catalyses 4 porphobilinogen + H2O = hydroxymethylbilane + 4 NH4(+). It participates in porphyrin-containing compound metabolism; protoporphyrin-IX biosynthesis; coproporphyrinogen-III from 5-aminolevulinate: step 2/4. In terms of biological role, tetrapolymerization of the monopyrrole PBG into the hydroxymethylbilane pre-uroporphyrinogen in several discrete steps. The polypeptide is Porphobilinogen deaminase (Escherichia coli O17:K52:H18 (strain UMN026 / ExPEC)).